We begin with the raw amino-acid sequence, 759 residues long: Spindle pole body component alp16 (759 aa).

Interacts with gamma-tubulin.

The protein localises to the cytoplasm. It is found in the cytoskeleton. Its subcellular location is the microtubule organizing center. The protein resides in the spindle pole body. Its function is as follows. Component of the gamma tubule complex that is required for the regulation of both interphase microtubules and mitotic bipolar spindles. The sequence is that of Spindle pole body component alp16 (alp16) from Schizosaccharomyces pombe (strain 972 / ATCC 24843) (Fission yeast).